The chain runs to 239 residues: Probable fimbrial chaperone YehC (239 aa).

The first 31 residues, 1–31 (MAAIPWRPFNLRGIKMKGLLSLLIFSMVLPA), serve as a signal peptide directing secretion.

The protein belongs to the periplasmic pilus chaperone family.

It is found in the periplasm. Functionally, part of the yehABCD fimbrial operon. Could contribute to adhesion to various surfaces in specific environmental niches. The protein is Probable fimbrial chaperone YehC (yehC) of Escherichia coli (strain K12).